We begin with the raw amino-acid sequence, 238 residues long: Probable 2-phosphosulfolactate phosphatase (238 aa).

Belongs to the ComB family. Mg(2+) serves as cofactor.

It catalyses the reaction (2R)-O-phospho-3-sulfolactate + H2O = (2R)-3-sulfolactate + phosphate. This Clostridium beijerinckii (strain ATCC 51743 / NCIMB 8052) (Clostridium acetobutylicum) protein is Probable 2-phosphosulfolactate phosphatase.